The chain runs to 229 residues: Potassium/proton antiporter CemA (229 aa).

Transmembrane regions (helical) follow at residues 7 to 27 (FIPF…YLSF), 106 to 126 (MILH…YSIL), 154 to 174 (ILLV…ELLI), and 189 to 209 (IISS…KYWI).

It belongs to the CemA family.

The protein localises to the plastid. It is found in the chloroplast inner membrane. It catalyses the reaction K(+)(in) + H(+)(out) = K(+)(out) + H(+)(in). In terms of biological role, contributes to K(+)/H(+) antiport activity by supporting proton efflux to control proton extrusion and homeostasis in chloroplasts in a light-dependent manner to modulate photosynthesis. Prevents excessive induction of non-photochemical quenching (NPQ) under continuous-light conditions. Indirectly promotes efficient inorganic carbon uptake into chloroplasts. The protein is Potassium/proton antiporter CemA of Spinacia oleracea (Spinach).